Reading from the N-terminus, the 404-residue chain is 26S proteasome regulatory subunit 6A-B (404 aa).

192–199 (GPPGTGKT) contacts ATP.

It belongs to the AAA ATPase family. As to quaternary structure, may form a heterodimer with a related family member.

Its subcellular location is the cytoplasm. It localises to the nucleus. The 26S proteasome is involved in the ATP-dependent degradation of ubiquitinated proteins. The regulatory (or ATPase) complex confers ATP dependency and substrate specificity to the 26S complex. This chain is 26S proteasome regulatory subunit 6A-B (psmc3-b), found in Xenopus laevis (African clawed frog).